A 401-amino-acid chain; its full sequence is Putative F-box/FBD/LRR-repeat protein At3g23955 (401 aa).

In terms of domain architecture, F-box spans 56 to 102 (VPARFQLPDPLLTQILNHLPTEEAVKTSVLSTRWRTLWLWVHNLELS). LRR repeat units follow at residues 128–152 (IESLKLSLDGNDASYLKPWIDAFVK) and 275–296 (MSSLYITLNASDLKWFPIFLRS). The FBD domain occupies 321-373 (IKRVSISSVPECLLSSLEFVEFKAPICGLAPEMMLVWYFLENSPTLKKLTLRL).

The chain is Putative F-box/FBD/LRR-repeat protein At3g23955 from Arabidopsis thaliana (Mouse-ear cress).